The chain runs to 368 residues: G-protein coupled receptor 183-A (368 aa).

Topologically, residues 1–27 (METTSANFTQNDSNVCTNLYNHRGWAQ) are extracellular. Residues Asn7 and Asn11 are each glycosylated (N-linked (GlcNAc...) asparagine). The helical transmembrane segment at 28 to 53 (YFLPAMYSLICIVGLLGNVLALHVIW) threads the bilayer. Topologically, residues 54–73 (PNLKKINSTTLYSANLVVSD) are cytoplasmic. Residues 74-91 (ILFSLALPLRVVYYARGF) traverse the membrane as a helical segment. Topologically, residues 92 to 101 (DWPMGEGLCK) are extracellular. Cys100 and Cys178 are disulfide-bonded. A helical membrane pass occupies residues 102–123 (AVALLFYINMYAGVNFMTCLSV). Topologically, residues 124–145 (DRFIAVVLPLRFSRFRKVQKVR) are cytoplasmic. The chain crosses the membrane as a helical span at residues 146–164 (YICGVVWVVVLMQTLPLLS). At 165–189 (MPMTNIEQSGHITCMEYPNFEKIDN) the chain is on the extracellular side. A helical transmembrane segment spans residues 190–212 (LPVMLIGAVVLGFGIPVITILVC). The Cytoplasmic segment spans residues 213 to 238 (YTALCLKLRHLAKSNKLTEKSGRSSK). Residues 239 to 262 (AIGVICTVILVFVVCYSPYHVDLL) form a helical membrane-spanning segment. Topologically, residues 263–282 (QYMIKKLRYDPDCSELHKFQ) are extracellular. The chain crosses the membrane as a helical span at residues 283–307 (ISLHITVCFMNLNSCLDPFIYFFAC). Residues 308–368 (KGYKKKVLKL…SSVLLNSLEQ (61 aa)) are Cytoplasmic-facing.

This sequence belongs to the G-protein coupled receptor 1 family.

The protein localises to the cell membrane. Its function is as follows. G-protein coupled receptor expressed in lymphocytes that acts as a chemotactic receptor for B-cells, T-cells, splenic dendritic cells, monocytes/macrophages and astrocytes. Receptor for oxysterol 7-alpha,25-dihydroxycholesterol (7-alpha,25-OHC) and other related oxysterols. Mediates cell positioning and movement of a number of cells by binding the 7-alpha,25-OHC ligand that forms a chemotactic gradient. Binding of 7-alpha,25-OHC mediates the correct localization of B-cells during humoral immune responses. This Danio rerio (Zebrafish) protein is G-protein coupled receptor 183-A (gpr183a).